We begin with the raw amino-acid sequence, 97 residues long: uncharacterized protein (97 aa).

This is an uncharacterized protein from Salmonella choleraesuis (strain SC-B67).